The sequence spans 235 residues: Probable transcriptional regulatory protein Ccur92_05350 (235 aa).

Belongs to the TACO1 family.

The protein localises to the cytoplasm. This chain is Probable transcriptional regulatory protein Ccur92_05350, found in Campylobacter curvus (strain 525.92).